The primary structure comprises 1083 residues: Chitin synthase 2 (1083 aa).

Composition is skewed to basic and acidic residues over residues 1–10 and 18–30; these read MSSEREERTF and DDVR…ENQE. Disordered stretches follow at residues 1 to 248 and 260 to 294; these read MSSE…IADD and DDDV…TLNE. An N-linked (GlcNAc...) asparagine glycan is attached at N23. Composition is skewed to polar residues over residues 38-49 and 61-70; these read SYASSMAESQTL and AKLQNKNRTS. N-linked (GlcNAc...) asparagine glycosylation is present at N67. 2 stretches are compositionally biased toward basic and acidic residues: residues 78–100 and 117–128; these read LPRD…KEQQ and RLRDVNSHDKLP. 3 stretches are compositionally biased toward polar residues: residues 132–148, 177–191, and 282–292; these read SPRN…SRSG, RPWT…FTRS, and SYMSSESQDTL. N417 carries N-linked (GlcNAc...) asparagine glycosylation. Transmembrane regions (helical) follow at residues 708-728, 747-767, 785-805, 820-840, 860-880, 889-909, 987-1007, and 1020-1040; these read WLNG…QIWF, FIQL…FYFV, TVIF…QFIL, ISMI…FYII, NMIV…ILYL, SAQY…YAFC, YLVL…SEIY, and FLLW…TTFA.

The protein belongs to the chitin synthase family. Class II subfamily.

The protein resides in the cell membrane. The enzyme catalyses [(1-&gt;4)-N-acetyl-beta-D-glucosaminyl](n) + UDP-N-acetyl-alpha-D-glucosamine = [(1-&gt;4)-N-acetyl-beta-D-glucosaminyl](n+1) + UDP + H(+). Its function is as follows. Polymerizes chitin, a structural polymer of the cell wall and septum, by transferring the sugar moiety of UDP-GlcNAc to the non-reducing end of the growing chitin polymer. Plays a critical role in cell wall integrity and virulence. This chain is Chitin synthase 2, found in Fusarium oxysporum f. sp. lycopersici (strain 4287 / CBS 123668 / FGSC 9935 / NRRL 34936) (Fusarium vascular wilt of tomato).